The sequence spans 72 residues: UPF0352 protein CGSHiGG_07710 (72 aa).

It belongs to the UPF0352 family.

This chain is UPF0352 protein CGSHiGG_07710, found in Haemophilus influenzae (strain PittGG).